The sequence spans 430 residues: MANVVVVGAQWGDEGKGKIVDWLAEQADVVVRFQGGHNAGHTLVIDGTTYKLSLLPSGVVRGGTLSVIGNGVVVDPWHLVDEIARLGQQGVTITPETLRIADNATLILPLHRELDHFRETANATLRIGTTKRGIGPAYEDKVGRRAIRVVDLADADLLGAKIERLLAHHNALRRGLGIEEVDGAALKTELLAIAPRILPFADTVWALLDEARRAGRRILFEGAQGALLDVDHGTYPYVTSSNIVAAQAATGSGLGPSAIGYVLGIVKAYTTRVGEGPFPTELTDAIGEKIGERGREFGVVTGRKRRCGWFDAALVRQTVRTSGIDGIALTKLDILDGFETIKICTGYRLDGRIIDHLPASQADQARVEPVYETIDGWFETTAGARSWAELPAQAIKYVRRIEELIGATVALLSTSPERDDTILVHNPFED.

GTP contacts are provided by residues 12-18 (GDEGKGK) and 40-42 (GHT). Catalysis depends on aspartate 13, which acts as the Proton acceptor. Mg(2+) is bound by residues aspartate 13 and glycine 40. IMP contacts are provided by residues 13–16 (DEGK), 38–41 (NAGH), threonine 130, arginine 144, glutamine 224, threonine 239, and arginine 303. Histidine 41 functions as the Proton donor in the catalytic mechanism. 299–305 (VVTGRKR) lines the substrate pocket. Residues arginine 305, 331 to 333 (KLD), and 413 to 415 (STS) each bind GTP.

Belongs to the adenylosuccinate synthetase family. Homodimer. The cofactor is Mg(2+).

It is found in the cytoplasm. The enzyme catalyses IMP + L-aspartate + GTP = N(6)-(1,2-dicarboxyethyl)-AMP + GDP + phosphate + 2 H(+). The protein operates within purine metabolism; AMP biosynthesis via de novo pathway; AMP from IMP: step 1/2. Plays an important role in the de novo pathway of purine nucleotide biosynthesis. Catalyzes the first committed step in the biosynthesis of AMP from IMP. The polypeptide is Adenylosuccinate synthetase (Methylobacterium nodulans (strain LMG 21967 / CNCM I-2342 / ORS 2060)).